The chain runs to 367 residues: Secondary metabolism regulator laeA (367 aa).

The tract at residues M1–N82 is disordered. Over residues L19 to M41 the composition is skewed to polar residues. Basic and acidic residues-rich tracts occupy residues T47–P56 and K71–N82.

It belongs to the methyltransferase superfamily. LaeA methyltransferase family. Component of the heterotrimeric velvet complex composed of laeA, veA and velB; VeA acting as a bridging protein between laeA and velB.

It localises to the nucleus. It carries out the reaction L-methionyl-[protein] + S-adenosyl-L-methionine = S-methyl-L-methionyl-[protein] + S-adenosyl-L-homocysteine. Its function is as follows. Methyltransferase that performs automethylation. No other methyl-accepting substrate has been identified yet. Component of the velvet transcription factor complex that acts as a global regulator for secondary metabolite gene expression. Controls the expression of the monacolin K gene clusters. Also regulates pigmentation. This Monascus pilosus (Red mold) protein is Secondary metabolism regulator laeA.